The chain runs to 127 residues: Anti-adapter protein IraD (127 aa).

The protein belongs to the GpW/Gp25 family. IraD subfamily. As to quaternary structure, interacts with RssB.

Its subcellular location is the cytoplasm. Its function is as follows. Inhibits RpoS proteolysis by regulating RssB activity, thereby increasing the stability of the sigma stress factor RpoS during oxidative stress. Its effect on RpoS stability is due to its interaction with RssB, which probably blocks the interaction of RssB with RpoS, and the consequent delivery of the RssB-RpoS complex to the ClpXP protein degradation pathway. The protein is Anti-adapter protein IraD of Escherichia coli O6:K15:H31 (strain 536 / UPEC).